Reading from the N-terminus, the 66-residue chain is COP-associated protein (66 aa).

The HMA domain occupies 1–66 (MKIDIPVKGM…AILDAGYELG (66 aa)). Residues Cys12 and Cys15 each coordinate Cu cation.

Functionally, part of a cation-transporting system which is associated with copper export out of the H.pylori cells. In Helicobacter felis (strain ATCC 49179 / CCUG 28539 / NCTC 12436 / CS1), this protein is COP-associated protein (copP).